A 153-amino-acid polypeptide reads, in one-letter code: uncharacterized protein (153 aa).

This is an uncharacterized protein from Bacillus subtilis (strain 168).